The following is a 199-amino-acid chain: FMN-dependent NADH:quinone oxidoreductase (199 aa).

FMN contacts are provided by residues serine 9, 15–17 (SNS), and 95–98 (MYNF).

It belongs to the azoreductase type 1 family. As to quaternary structure, homodimer. FMN is required as a cofactor.

The catalysed reaction is 2 a quinone + NADH + H(+) = 2 a 1,4-benzosemiquinone + NAD(+). The enzyme catalyses N,N-dimethyl-1,4-phenylenediamine + anthranilate + 2 NAD(+) = 2-(4-dimethylaminophenyl)diazenylbenzoate + 2 NADH + 2 H(+). In terms of biological role, quinone reductase that provides resistance to thiol-specific stress caused by electrophilic quinones. Its function is as follows. Also exhibits azoreductase activity. Catalyzes the reductive cleavage of the azo bond in aromatic azo compounds to the corresponding amines. The chain is FMN-dependent NADH:quinone oxidoreductase from Aromatoleum aromaticum (strain DSM 19018 / LMG 30748 / EbN1) (Azoarcus sp. (strain EbN1)).